The sequence spans 364 residues: Chorismate synthase (364 aa).

Residue Arg47 participates in NADP(+) binding. Residues 125–127 (RAS), Gly288, 303–307 (KPTAT), and Arg329 contribute to the FMN site.

This sequence belongs to the chorismate synthase family. Homotetramer. The cofactor is FMNH2.

It catalyses the reaction 5-O-(1-carboxyvinyl)-3-phosphoshikimate = chorismate + phosphate. The protein operates within metabolic intermediate biosynthesis; chorismate biosynthesis; chorismate from D-erythrose 4-phosphate and phosphoenolpyruvate: step 7/7. Catalyzes the anti-1,4-elimination of the C-3 phosphate and the C-6 proR hydrogen from 5-enolpyruvylshikimate-3-phosphate (EPSP) to yield chorismate, which is the branch point compound that serves as the starting substrate for the three terminal pathways of aromatic amino acid biosynthesis. This reaction introduces a second double bond into the aromatic ring system. This is Chorismate synthase from Synechococcus sp. (strain CC9605).